Consider the following 351-residue polypeptide: N-terminal EF-hand calcium-binding protein 1 (351 aa).

Serine 4 is modified (phosphoserine). 2 EF-hand domains span residues lysine 26–serine 61 and leucine 60–glutamate 95. The Ca(2+) site is built by aspartate 39, asparagine 41, aspartate 43, lysine 45, and glutamate 50. Positions leucine 135–glutamine 163 form a coiled coil. Residues glycine 180–serine 203 are disordered. The span at histidine 190–valine 202 shows a compositional bias: polar residues. Phosphoserine occurs at positions 192 and 197. The stretch at glutamate 209–tyrosine 275 forms a coiled coil. One can recognise an ABM domain in the interval methionine 252–methionine 340.

Interacts with STX1. May interact with CPNE6. Expressed in brain (at protein level).

It localises to the cytoplasm. In Homo sapiens (Human), this protein is N-terminal EF-hand calcium-binding protein 1 (NECAB1).